Consider the following 243-residue polypeptide: MLTFLIPTAKEMKPVPPCYPHQLPQKSLPILEAMAELSLEELARAYSISIEAASKEAKRLKAIAQGQSSAYPAYQLFNGLMYRHLKRDNLSKDQQDYLSKQVYITSSFYGIIPTDEKIAEHRHDFHTKVTINGQSLKHYWRPIYDQFAKDHKQIISLLSSEFKDVFSKEYQRLWISPKFMEERSGQLKTHSTISKKARGAFLTACLENNVQTKEALKQLSFAGFCYNEELSTETNYYYIKKES.

This sequence belongs to the UPF0246 family.

This is UPF0246 protein Sez_1855 from Streptococcus equi subsp. zooepidemicus (strain MGCS10565).